Reading from the N-terminus, the 553-residue chain is Glucose-6-phosphate isomerase (553 aa).

Residues 164–165 (GS), 215–220 (SKTFTT), Gln-359, Glu-363, His-394, and Lys-516 each bind D-glucose 6-phosphate. The active-site Proton donor is Glu-363. Active-site residues include His-394 and Lys-516.

It belongs to the GPI family. Homodimer.

The protein localises to the cytoplasm. It is found in the cytosol. It catalyses the reaction alpha-D-glucose 6-phosphate = beta-D-fructose 6-phosphate. Its pathway is carbohydrate degradation; glycolysis; D-glyceraldehyde 3-phosphate and glycerone phosphate from D-glucose: step 2/4. In the cytoplasm, catalyzes the conversion of glucose-6-phosphate to fructose-6-phosphate, the second step in glycolysis, and the reverse reaction during gluconeogenesis. This is Glucose-6-phosphate isomerase (pgiA) from Aspergillus oryzae (strain ATCC 42149 / RIB 40) (Yellow koji mold).